The primary structure comprises 288 residues: S-methyl-5'-thioadenosine phosphorylase (288 aa).

Phosphate contacts are provided by residues serine 10, 52-53, and 85-86; these read RH and TA. Residue methionine 188 coordinates substrate. Residue threonine 189 participates in phosphate binding. Residue 212–214 participates in substrate binding; the sequence is DYD.

Belongs to the PNP/MTAP phosphorylase family. MTAP subfamily. In terms of assembly, homotrimer.

The protein localises to the cytoplasm. The protein resides in the nucleus. The enzyme catalyses S-methyl-5'-thioadenosine + phosphate = 5-(methylsulfanyl)-alpha-D-ribose 1-phosphate + adenine. It participates in amino-acid biosynthesis; L-methionine biosynthesis via salvage pathway; S-methyl-5-thio-alpha-D-ribose 1-phosphate from S-methyl-5'-thioadenosine (phosphorylase route): step 1/1. In terms of biological role, catalyzes the reversible phosphorylation of S-methyl-5'-thioadenosine (MTA) to adenine and 5-methylthioribose-1-phosphate. Involved in the breakdown of MTA, a major by-product of polyamine biosynthesis. Responsible for the first step in the methionine salvage pathway after MTA has been generated from S-adenosylmethionine. Has broad substrate specificity with 6-aminopurine nucleosides as preferred substrates. The sequence is that of S-methyl-5'-thioadenosine phosphorylase from Caenorhabditis elegans.